The chain runs to 101 residues: Putative membrane protein insertion efficiency factor (101 aa).

The protein belongs to the UPF0161 family.

It localises to the cell inner membrane. In terms of biological role, could be involved in insertion of integral membrane proteins into the membrane. The protein is Putative membrane protein insertion efficiency factor of Methylobacterium sp. (strain 4-46).